Here is a 313-residue protein sequence, read N- to C-terminus: Beta-lactamase BRO-1 (313 aa).

The first 25 residues, 1-25 (MQRRHFLQKTLLALPIIFSGNLLTG), serve as a signal peptide directing secretion. Residue Cys-26 is the site of N-palmitoyl cysteine attachment. Cys-26 carries the S-diacylglycerol cysteine lipid modification. The active-site Acyl-ester intermediate is Ser-90. 255 to 257 (KTG) provides a ligand contact to substrate.

It belongs to the class-A beta-lactamase family.

Its subcellular location is the cell membrane. The enzyme catalyses a beta-lactam + H2O = a substituted beta-amino acid. The polypeptide is Beta-lactamase BRO-1 (bla) (Moraxella catarrhalis (Branhamella catarrhalis)).